Reading from the N-terminus, the 263-residue chain is Reductase pytE (263 aa).

Belongs to the avfA family.

It functions in the pathway secondary metabolite biosynthesis. Functionally, reductase; part of the gene cluster that mediates the biosynthesis of pyranterreones, a family of antioxidative compounds. The first step of pyranonigrins biosynthesis is performed by the hybrid PKS-NRPS synthetase pytA that condenses 4 malonyl-CoA units ato the acetyl starter unit by the modular PKS of pytA. The acyl chain is then connected to an L-serine through the amide bond by the modular NRPS of pytA. A tetramic acid is formed and released from the PKS-NRPS pytA to give pyranterreone 5 with the help of the thioesterase pytI. Pyranterreone 5 could be methylated by pytC to afford pyranterreone 6. Both pyranterreones 5 and 6 are subsequently oxidized by the FAD-linked oxidoreductase pytB and the cytochrome P450 monooxygenase pytD to form the fused gamma-pyrone core, resulting in pyranterreones 7 and 11, respectively. The hydroxy group at C-8 of pyranterreones 7 and 11 are dehydrated by the aspartyl protease pytH to form a delta-7 double bond to give pyranterreones 3 and 1, 2 accordingly. The exo-methylene of pyranterreone 3 could be reduced into a pendant methyl by reductase pytE to provide pyranterreone 4, also known as cordylactam. Pyranterreone 4 can be reconverted to pyranterreone 3 through pytB-catalyzed dehydrogenation or further oxidized to pyranterreones 9 and 10. The polypeptide is Reductase pytE (Aspergillus terreus).